We begin with the raw amino-acid sequence, 653 residues long: MTEPILALSHICREFMTGDTKVAALADVTLDIDRGELVAIIGSSGSGKSTLLNILGCLDHATSGSYRVAGEDVAALDADALAALRREHFGFIFQRYHLLSELPALENVEIPAVYAGDTASERQARAERLLARLGMAERRGHRPNQLSGGQQQRVSIARALMNGAEVVLADEPTGALDRRSGEEVLKILVELHREGKTIIIVTHDPEVAKRANRVIELRDGLVVSDKRTDAAVATAAASLPADKPDTRSSRWSGLAFRFRETLRMALLSMAAHRLRSFLTMLGIIIGIAAVSSVVALGNASQNKVLSDISNLGTNTIEVFPGKDFGDARAGKIKTLVLDDARALDRQTFIAGVTPTVSTSTTVRYRDRESNVLVNGVDRSYFQVKGTKIAAGALFDAVAVRNIERQAVIDDNTRRTFFSDDQNAGIGRVIWVGKVPCRVVGVIAQQQGGFGSNQNLSVYLPYTTVQAQFTGDRSLRSVLLRVSDEVSTDLAQEAVTTLLTRRHSTKDFVILNTDDIRRTITSTTQTLAFLVAAIAVISLVVGGIGVMNIMLVSVSERIGEIGVRMAVGARREDILQQFLVEATLISSLGGIAGILIAVALGALLNLLLPGFQVSYSTFSIGAAFLTSTAIGIFFGYFPARRAASFDPVVALSRE.

Positions 6–244 constitute an ABC transporter domain; that stretch reads LALSHICREF…AAASLPADKP (239 aa). 42-49 lines the ATP pocket; the sequence is GSSGSGKS. A run of 4 helical transmembrane segments spans residues 277 to 297, 526 to 546, 587 to 607, and 617 to 637; these read FLTMLGIIIGIAAVSSVVALG, LAFLVAAIAVISLVVGGIGVM, LGGIAGILIAVALGALLNLLL, and FSIGAAFLTSTAIGIFFGYFP.

Belongs to the ABC transporter superfamily. Macrolide exporter (TC 3.A.1.122) family. In terms of assembly, homodimer.

It is found in the cell inner membrane. Non-canonical ABC transporter that contains transmembrane domains (TMD), which form a pore in the inner membrane, and an ATP-binding domain (NBD), which is responsible for energy generation. Confers resistance against macrolides. The chain is Macrolide export ATP-binding/permease protein MacB from Bradyrhizobium diazoefficiens (strain JCM 10833 / BCRC 13528 / IAM 13628 / NBRC 14792 / USDA 110).